Here is a 481-residue protein sequence, read N- to C-terminus: Amino acid permease 6 (481 aa).

Over 1-36 (MEKKKSMFVEQSFPEHEIGDTNKNFDEDGRDKRTGT) the chain is Cytoplasmic. The next 2 membrane-spanning stretches (helical) occupy residues 37-57 (WMTG…LSLA) and 58-78 (WAIA…FSFI). At 79-125 (TYFTSTMLADCYRSPDPVTGKRNYTYMEVVRSYLGGRKVQLCGLAQY) the chain is on the cytoplasmic side. A helical transmembrane segment spans residues 126-146 (GNLIGITIGYTITASISMVAV). The Extracellular portion of the chain corresponds to 147–167 (KRSNCFHKNGHNVKCATSNTP). The chain crosses the membrane as a helical span at residues 168–188 (FMIIFAIIQIILSQIPNFHNL). Topologically, residues 189 to 190 (SW) are cytoplasmic. Residues 191-211 (LSILAAVMSFCYASIGVGLSI) traverse the membrane as a helical segment. At 212 to 242 (AKAAGGGEHVRTTLTGVTVGIDVSGAEKIWR) the chain is on the extracellular side. The chain crosses the membrane as a helical span at residues 243–263 (TFQAIGDIAFAYAYSTVLIEI). At 264–283 (QDTLKAGPPSENKAMKRASL) the chain is on the cytoplasmic side. A helical transmembrane segment spans residues 284–304 (VGVSTTTFFYMLCGCVGYAAF). At 305–321 (GNDAPGNFLTGFGFYEP) the chain is on the extracellular side. A helical transmembrane segment spans residues 322-342 (FWLIDFANVCIAVHLIGAYQV). The Cytoplasmic segment spans residues 343–385 (FCQPIFQFVESQSAKRWPDNKFITGEYKIHVPCCGDFSINFLR). A helical membrane pass occupies residues 386–405 (LVWRTSYVVVTAVVAMIFPF). At 406–408 (FND) the chain is on the extracellular side. A helical membrane pass occupies residues 409 to 427 (FLGLIGAASFWPLTVYFPI). At 428–447 (EMHIAQKKIPKFSFTWTWLK) the chain is on the cytoplasmic side. The chain crosses the membrane as a helical span at residues 448 to 468 (ILSWTCFIVSLVAAAGSVQGL). At 469-481 (IQSLKDFKPFQAP) the chain is on the extracellular side.

The protein belongs to the amino acid/polyamine transporter 2 family. Amino acid/auxin permease (AAAP) (TC 2.A.18.2) subfamily. Expressed in roots and leaves, and at lower levels in stems and flowers. Found in the xylem parenchyma.

It is found in the cell membrane. In terms of biological role, amino acid-proton symporter. Stereospecific transporter with a broad specificity for tryptophan, proline, and neutral and acidic amino acids. Has an affinity for aspartate in a physiological range. Involved in the uptake of amino acids diffusing out of the xylem tracheids into the xylem parenchyma. The protein is Amino acid permease 6 (AAP6) of Arabidopsis thaliana (Mouse-ear cress).